Consider the following 250-residue polypeptide: Imidazole glycerol phosphate synthase subunit HisF (250 aa).

Active-site residues include Asp11 and Asp130.

It belongs to the HisA/HisF family. Heterodimer of HisH and HisF.

It is found in the cytoplasm. It catalyses the reaction 5-[(5-phospho-1-deoxy-D-ribulos-1-ylimino)methylamino]-1-(5-phospho-beta-D-ribosyl)imidazole-4-carboxamide + L-glutamine = D-erythro-1-(imidazol-4-yl)glycerol 3-phosphate + 5-amino-1-(5-phospho-beta-D-ribosyl)imidazole-4-carboxamide + L-glutamate + H(+). It functions in the pathway amino-acid biosynthesis; L-histidine biosynthesis; L-histidine from 5-phospho-alpha-D-ribose 1-diphosphate: step 5/9. Its function is as follows. IGPS catalyzes the conversion of PRFAR and glutamine to IGP, AICAR and glutamate. The HisF subunit catalyzes the cyclization activity that produces IGP and AICAR from PRFAR using the ammonia provided by the HisH subunit. The polypeptide is Imidazole glycerol phosphate synthase subunit HisF (Bacteroides fragilis (strain ATCC 25285 / DSM 2151 / CCUG 4856 / JCM 11019 / LMG 10263 / NCTC 9343 / Onslow / VPI 2553 / EN-2)).